The primary structure comprises 164 residues: CB1 cannabinoid receptor-interacting protein 1 (164 aa).

Belongs to the CNRIP family. Interacts with the cannabinoid receptor CNR1 (via C-terminus). Does not interact with cannabinoid receptor CNR2. In terms of tissue distribution, highly expressed in brain. Also detected in heart, lung, intestine, kidney, testis, spleen, liver and muscle (at protein level).

Its function is as follows. Suppresses cannabinoid receptor CNR1-mediated tonic inhibition of voltage-gated calcium channels. The sequence is that of CB1 cannabinoid receptor-interacting protein 1 (Cnrip1) from Mus musculus (Mouse).